Consider the following 446-residue polypeptide: Probable glucan endo-1,3-beta-glucosidase eglC (446 aa).

The signal sequence occupies residues 1–18 (MQFTHLVALALALATSEA). The Proton donor role is filled by Glu-128. Asn-183 carries N-linked (GlcNAc...) asparagine glycosylation. The active-site Nucleophile is Glu-239. Asn-364 and Asn-370 each carry an N-linked (GlcNAc...) asparagine glycan. The segment at 393-416 (SSGAGASGASGQSSSSTGSSSAPS) is disordered. A compositionally biased stretch (low complexity) spans 401–416 (ASGQSSSSTGSSSAPS). Residue Asn-423 is the site of GPI-anchor amidated asparagine attachment. A propeptide spans 424–446 (AASGLSGSIFGAVVAVCLALAAL) (removed in mature form).

This sequence belongs to the glycosyl hydrolase 17 family. The GPI-anchor is attached to the protein in the endoplasmic reticulum and serves to target the protein to the cell surface. There, the glucosamine-inositol phospholipid moiety is cleaved off and the GPI-modified mannoprotein is covalently attached via its lipidless GPI glycan remnant to the 1,6-beta-glucan of the outer cell wall layer.

The protein resides in the cell membrane. It is found in the secreted. It localises to the cell wall. The catalysed reaction is Hydrolysis of (1-&gt;3)-beta-D-glucosidic linkages in (1-&gt;3)-beta-D-glucans.. Its function is as follows. Glucanases play a role in cell expansion during growth, in cell-cell fusion during mating, and in spore release during sporulation. This enzyme may be involved in beta-glucan degradation and also function biosynthetically as a transglycosylase. The polypeptide is Probable glucan endo-1,3-beta-glucosidase eglC (eglC) (Aspergillus fumigatus (strain ATCC MYA-4609 / CBS 101355 / FGSC A1100 / Af293) (Neosartorya fumigata)).